The chain runs to 68 residues: Small cysteine-rich protein 5 (68 aa).

An N-terminal signal peptide occupies residues 1–24 (MAVKFHLCLLLIILVGMGAHVAFA).

It belongs to the Cnidaria small cysteine-rich protein (SCRiP) family. gamma subfamily. Post-translationally, contains 4 disulfide bonds.

Its subcellular location is the secreted. It is found in the nematocyst. Functionally, induces neurotoxic symptoms on zebrafish. Has also been claimed to be implied in calcification, but tests on homolog proteins suggest that proteins of this family have a neurotoxic function and not a calcification function. The protein is Small cysteine-rich protein 5 of Orbicella faveolata (Mountainous star coral).